Here is a 54-residue protein sequence, read N- to C-terminus: UPF0391 membrane protein Bpro_0879 (54 aa).

2 consecutive transmembrane segments (helical) span residues 6–26 (VVFL…IAAG) and 30–50 (IAKI…VMGL).

It belongs to the UPF0391 family.

The protein localises to the cell membrane. The protein is UPF0391 membrane protein Bpro_0879 of Polaromonas sp. (strain JS666 / ATCC BAA-500).